Consider the following 248-residue polypeptide: tRNA (guanine-N(1)-)-methyltransferase (248 aa).

Residues Gly117 and 137–142 (IGDFVL) contribute to the S-adenosyl-L-methionine site.

The protein belongs to the RNA methyltransferase TrmD family. Homodimer.

It localises to the cytoplasm. It carries out the reaction guanosine(37) in tRNA + S-adenosyl-L-methionine = N(1)-methylguanosine(37) in tRNA + S-adenosyl-L-homocysteine + H(+). Functionally, specifically methylates guanosine-37 in various tRNAs. The polypeptide is tRNA (guanine-N(1)-)-methyltransferase (Polynucleobacter asymbioticus (strain DSM 18221 / CIP 109841 / QLW-P1DMWA-1) (Polynucleobacter necessarius subsp. asymbioticus)).